A 55-amino-acid polypeptide reads, in one-letter code: Large ribosomal subunit protein bL32 (55 aa).

Over residues 1 to 19 (MAVPKRRMSRANTHSRRSQ) the composition is skewed to basic residues. A disordered region spans residues 1–20 (MAVPKRRMSRANTHSRRSQW).

The protein belongs to the bacterial ribosomal protein bL32 family.

This Corynebacterium jeikeium (strain K411) protein is Large ribosomal subunit protein bL32.